The sequence spans 792 residues: Lon protease (792 aa).

The Lon N-terminal domain occupies 16 to 208 (LPILPLRETV…KVTYYLTREL (193 aa)). Residue 360 to 367 (GPPGVGKT) participates in ATP binding. The 182-residue stretch at 597 to 778 (KDEVGVATGL…DEVLNLALLE (182 aa)) folds into the Lon proteolytic domain. Active-site residues include S684 and K727.

Belongs to the peptidase S16 family. As to quaternary structure, homohexamer. Organized in a ring with a central cavity.

It is found in the cytoplasm. The catalysed reaction is Hydrolysis of proteins in presence of ATP.. ATP-dependent serine protease that mediates the selective degradation of mutant and abnormal proteins as well as certain short-lived regulatory proteins. Required for cellular homeostasis and for survival from DNA damage and developmental changes induced by stress. Degrades polypeptides processively to yield small peptide fragments that are 5 to 10 amino acids long. Binds to DNA in a double-stranded, site-specific manner. This chain is Lon protease, found in Dictyoglomus thermophilum (strain ATCC 35947 / DSM 3960 / H-6-12).